We begin with the raw amino-acid sequence, 70 residues long: Large ribosomal subunit protein bL31 (70 aa).

It belongs to the bacterial ribosomal protein bL31 family. Type A subfamily. In terms of assembly, part of the 50S ribosomal subunit.

Its function is as follows. Binds the 23S rRNA. This Mycoplasma mobile (strain ATCC 43663 / 163K / NCTC 11711) (Mesomycoplasma mobile) protein is Large ribosomal subunit protein bL31.